A 465-amino-acid polypeptide reads, in one-letter code: Ribulose bisphosphate carboxylase large chain (465 aa).

An N6,N6,N6-trimethyllysine modification is found at lysine 4. Substrate-binding residues include asparagine 113 and threonine 163. The active-site Proton acceptor is lysine 165. Lysine 167 serves as a coordination point for substrate. Residues lysine 191, aspartate 193, and glutamate 194 each coordinate Mg(2+). N6-carboxylysine is present on lysine 191. The active-site Proton acceptor is histidine 284. Residues arginine 285, histidine 317, and serine 369 each coordinate substrate.

It belongs to the RuBisCO large chain family. Type I subfamily. In terms of assembly, heterohexadecamer of 8 large chains and 8 small chains; disulfide-linked. The disulfide link is formed within the large subunit homodimers. The cofactor is Mg(2+). Post-translationally, the disulfide bond which can form in the large chain dimeric partners within the hexadecamer appears to be associated with oxidative stress and protein turnover.

The protein localises to the plastid. The protein resides in the chloroplast. It catalyses the reaction 2 (2R)-3-phosphoglycerate + 2 H(+) = D-ribulose 1,5-bisphosphate + CO2 + H2O. The enzyme catalyses D-ribulose 1,5-bisphosphate + O2 = 2-phosphoglycolate + (2R)-3-phosphoglycerate + 2 H(+). In terms of biological role, ruBisCO catalyzes two reactions: the carboxylation of D-ribulose 1,5-bisphosphate, the primary event in carbon dioxide fixation, as well as the oxidative fragmentation of the pentose substrate in the photorespiration process. Both reactions occur simultaneously and in competition at the same active site. The polypeptide is Ribulose bisphosphate carboxylase large chain (Acer saccharum (Sugar maple)).